A 441-amino-acid chain; its full sequence is UDP-N-acetylglucosamine--N-acetylmuramyl-(pentapeptide) pyrophosphoryl-undecaprenol N-acetylglucosamine transferase (441 aa).

Residues 28–30 (TGG), N140, R176, S204, I257, and Q302 each bind UDP-N-acetyl-alpha-D-glucosamine.

The protein belongs to the glycosyltransferase 28 family. MurG subfamily.

It is found in the cell inner membrane. It carries out the reaction di-trans,octa-cis-undecaprenyl diphospho-N-acetyl-alpha-D-muramoyl-L-alanyl-D-glutamyl-meso-2,6-diaminopimeloyl-D-alanyl-D-alanine + UDP-N-acetyl-alpha-D-glucosamine = di-trans,octa-cis-undecaprenyl diphospho-[N-acetyl-alpha-D-glucosaminyl-(1-&gt;4)]-N-acetyl-alpha-D-muramoyl-L-alanyl-D-glutamyl-meso-2,6-diaminopimeloyl-D-alanyl-D-alanine + UDP + H(+). It participates in cell wall biogenesis; peptidoglycan biosynthesis. Its function is as follows. Cell wall formation. Catalyzes the transfer of a GlcNAc subunit on undecaprenyl-pyrophosphoryl-MurNAc-pentapeptide (lipid intermediate I) to form undecaprenyl-pyrophosphoryl-MurNAc-(pentapeptide)GlcNAc (lipid intermediate II). The chain is UDP-N-acetylglucosamine--N-acetylmuramyl-(pentapeptide) pyrophosphoryl-undecaprenol N-acetylglucosamine transferase from Xanthomonas oryzae pv. oryzae (strain MAFF 311018).